The chain runs to 153 residues: Aspartate carbamoyltransferase regulatory chain (153 aa).

Positions 109, 114, 138, and 141 each coordinate Zn(2+).

Belongs to the PyrI family. Contains catalytic and regulatory chains. It depends on Zn(2+) as a cofactor.

Its function is as follows. Involved in allosteric regulation of aspartate carbamoyltransferase. The sequence is that of Aspartate carbamoyltransferase regulatory chain from Vibrio vulnificus (strain CMCP6).